Consider the following 173-residue polypeptide: Probable chemoreceptor glutamine deamidase CheD (173 aa).

This sequence belongs to the CheD family.

The enzyme catalyses L-glutaminyl-[protein] + H2O = L-glutamyl-[protein] + NH4(+). Probably deamidates glutamine residues to glutamate on methyl-accepting chemotaxis receptors (MCPs), playing an important role in chemotaxis. The sequence is that of Probable chemoreceptor glutamine deamidase CheD from Haloarcula marismortui (strain ATCC 43049 / DSM 3752 / JCM 8966 / VKM B-1809) (Halobacterium marismortui).